The following is a 328-amino-acid chain: Peroxisomal adenine nucleotide transporter 1 (328 aa).

The next 6 membrane-spanning stretches (helical) occupy residues 1–21 (MLTLESALTGAVASAMANIAV), 78–98 (TVTTVATFVQNFVYFFWYTFI), 128–148 (LVLGVAAASISQLFTSPMAVV), 185–202 (LRTGLALTINPSITYASF), 226–246 (FILGVLSKMISTLVTQPLIVA), and 277–297 (WKGVLPQLTKGVIVQGLLFAF). Solcar repeat units lie at residues 1–101 (MLTL…IRKS), 122–208 (PSTI…LKEV), and 220–304 (LSAV…LTKS).

It belongs to the mitochondrial carrier (TC 2.A.29) family.

The protein localises to the peroxisome membrane. Adenine nucleotide transporter involved in the uniport of ATP and adenine nucleotide hetero-exchange transport between the cytosol and the peroxisomal lumen. This transport is accompanied by a proton transport from the peroxisomal lumen to the cytosol. Transport of ATP into the peroxisome is required for beta-oxidation of medium-chain fatty acids. Required for growth on medium-chain fatty acids, pH gradient formation in peroxisomes and for normal peroxisome proliferation. This chain is Peroxisomal adenine nucleotide transporter 1 (ANT1), found in Saccharomyces cerevisiae (strain ATCC 204508 / S288c) (Baker's yeast).